The following is a 145-amino-acid chain: Transmembrane protein 170A (145 aa).

The Lumenal portion of the chain corresponds to M1 to G50. N-linked (GlcNAc...) asparagine glycans are attached at residues N31 and N37. Residues V51–L71 form a helical membrane-spanning segment. The Cytoplasmic segment spans residues A72–R81. The helical transmembrane segment at F82–T102 threads the bilayer. Topologically, residues S103–M117 are lumenal. A helical transmembrane segment spans residues F118–F138. Residues L139–L145 are Cytoplasmic-facing.

The protein belongs to the TMEM170 family.

It is found in the endoplasmic reticulum membrane. Its subcellular location is the nucleus envelope. In terms of biological role, may regulate membrane morphogenesis in the endoplasmic reticulum (ER) by promoting ER sheet formation at the expense of ER tubules. The chain is Transmembrane protein 170A (tmem170a) from Danio rerio (Zebrafish).